The following is a 373-amino-acid chain: DNA replication and repair protein RecF (373 aa).

An ATP-binding site is contributed by 30–37; sequence GENAQGKT.

Belongs to the RecF family.

It is found in the cytoplasm. Functionally, the RecF protein is involved in DNA metabolism; it is required for DNA replication and normal SOS inducibility. RecF binds preferentially to single-stranded, linear DNA. It also seems to bind ATP. The sequence is that of DNA replication and repair protein RecF from Bacillus cytotoxicus (strain DSM 22905 / CIP 110041 / 391-98 / NVH 391-98).